Consider the following 462-residue polypeptide: Sugar transporter ERD6-like 12 (462 aa).

12 helical membrane-spanning segments follow: residues Leu25–Gly45, Leu62–Phe82, Leu101–Met121, Phe124–Ile144, Gly151–Phe171, Thr179–Pro199, Leu262–Ser282, Ile297–Val317, Leu326–Val346, Ile358–Leu378, Val399–Val419, and Gly424–Val444.

The protein belongs to the major facilitator superfamily. Sugar transporter (TC 2.A.1.1) family.

The protein localises to the membrane. Sugar transporter. This Arabidopsis thaliana (Mouse-ear cress) protein is Sugar transporter ERD6-like 12 (SUGTL5).